We begin with the raw amino-acid sequence, 174 residues long: Adenylate kinase (174 aa).

Residues Ser-12–Val-41 are NMP. AMP is bound by residues Thr-13, Arg-18, Gly-39–Val-41, Gly-67–Arg-70, and Gln-74. An LID region spans residues Gly-104 to Asp-141. ATP-binding positions include Arg-105 and Thr-114–Tyr-115. Residues Arg-138 and Arg-149 each contribute to the AMP site.

The protein belongs to the adenylate kinase family. In terms of assembly, monomer.

It is found in the cytoplasm. It carries out the reaction AMP + ATP = 2 ADP. It participates in purine metabolism; AMP biosynthesis via salvage pathway; AMP from ADP: step 1/1. Its function is as follows. Catalyzes the reversible transfer of the terminal phosphate group between ATP and AMP. Plays an important role in cellular energy homeostasis and in adenine nucleotide metabolism. This Neisseria lactamica protein is Adenylate kinase.